Consider the following 295-residue polypeptide: Pyridoxal 5'-phosphate synthase subunit PdxS (295 aa).

Residue Asp-25 participates in D-ribose 5-phosphate binding. Lys-82 (schiff-base intermediate with D-ribose 5-phosphate) is an active-site residue. D-ribose 5-phosphate is bound at residue Gly-154. Arg-166 contacts D-glyceraldehyde 3-phosphate. D-ribose 5-phosphate-binding positions include Gly-215 and 236-237 (GS).

It belongs to the PdxS/SNZ family. In the presence of PdxT, forms a dodecamer of heterodimers.

The catalysed reaction is aldehydo-D-ribose 5-phosphate + D-glyceraldehyde 3-phosphate + L-glutamine = pyridoxal 5'-phosphate + L-glutamate + phosphate + 3 H2O + H(+). It functions in the pathway cofactor biosynthesis; pyridoxal 5'-phosphate biosynthesis. Its function is as follows. Catalyzes the formation of pyridoxal 5'-phosphate from ribose 5-phosphate (RBP), glyceraldehyde 3-phosphate (G3P) and ammonia. The ammonia is provided by the PdxT subunit. Can also use ribulose 5-phosphate and dihydroxyacetone phosphate as substrates, resulting from enzyme-catalyzed isomerization of RBP and G3P, respectively. The chain is Pyridoxal 5'-phosphate synthase subunit PdxS from Actinobacillus pleuropneumoniae serotype 5b (strain L20).